The sequence spans 316 residues: Protein lifeguard 2 (316 aa).

The segment at 1 to 53 is disordered; the sequence is MTQGKLSVANKAPGTEGQQQVHGEKKEAPAVPSAPPSYEEATSGEGMKAGAFP. The next 3 helical transmembrane spans lie at 106-126, 138-158, and 165-185; these read VYTI…LFTF, PGWY…LACC, and FPWN…LTGM. An N-linked (GlcNAc...) asparagine glycan is attached at asparagine 191. The next 4 membrane-spanning stretches (helical) occupy residues 194–214, 225–245, 250–270, and 290–310; these read SVLL…VFSF, GVLF…AILL, VPWL…LFLA, and IFGA…FLQL.

It belongs to the BI1 family. LFG subfamily. As to quaternary structure, interacts with FAS/TNFRSF6 and BAX.

It is found in the cell membrane. Its subcellular location is the membrane raft. The protein localises to the postsynaptic cell membrane. Its function is as follows. Antiapoptotic protein which protects cells uniquely from Fas-induced apoptosis. Regulates Fas-mediated apoptosis in neurons by interfering with caspase-8 activation. Plays a role in cerebellar development by affecting cerebellar size, internal granular layer (IGL) thickness, and Purkinje cell (PC) development. This chain is Protein lifeguard 2 (FAIM2), found in Pongo abelii (Sumatran orangutan).